Consider the following 265-residue polypeptide: Octanoyltransferase (265 aa).

Residues 35-254 (DEVPDTVLLL…HLRDVLENAE (220 aa)) enclose the BPL/LPL catalytic domain. Substrate-binding positions include 73 to 80 (RGGKITWH), 184 to 186 (AIG), and 197 to 199 (GFA). Catalysis depends on cysteine 215, which acts as the Acyl-thioester intermediate.

This sequence belongs to the LipB family.

The protein localises to the cytoplasm. It carries out the reaction octanoyl-[ACP] + L-lysyl-[protein] = N(6)-octanoyl-L-lysyl-[protein] + holo-[ACP] + H(+). Its pathway is protein modification; protein lipoylation via endogenous pathway; protein N(6)-(lipoyl)lysine from octanoyl-[acyl-carrier-protein]: step 1/2. In terms of biological role, catalyzes the transfer of endogenously produced octanoic acid from octanoyl-acyl-carrier-protein onto the lipoyl domains of lipoate-dependent enzymes. Lipoyl-ACP can also act as a substrate although octanoyl-ACP is likely to be the physiological substrate. The chain is Octanoyltransferase from Streptomyces coelicolor (strain ATCC BAA-471 / A3(2) / M145).